A 461-amino-acid chain; its full sequence is Ribitol-5-phosphate transferase FKTN (461 aa).

Residues 1-7 (MSRINKN) lie on the Cytoplasmic side of the membrane. The segment at 6 to 27 (KNVVLALLTLTSSAFLLFQLYY) is required and sufficient for interaction with POMGNT1. The chain crosses the membrane as a helical; Signal-anchor for type II membrane protein span at residues 8 to 28 (VVLALLTLTSSAFLLFQLYYY). Over 29 to 461 (KHYLSTRNGA…SEWDEVIQLY (433 aa)) the chain is Lumenal. The N-linked (GlcNAc...) asparagine glycan is linked to Asn92.

The protein belongs to the LicD transferase family. As to quaternary structure, forms a complex composed of FKTN/fukutin, FKRP and RXYLT1/TMEM5. Interacts (via transmembrane domain) with POMGNT1; the interaction is direct and is required for normal POMGNT1 location in Golgi membranes. Expressed in the retina (at protein level).

It is found in the golgi apparatus membrane. The protein resides in the cytoplasm. Its subcellular location is the nucleus. The enzyme catalyses 3-O-[beta-D-GalNAc-(1-&gt;3)-beta-D-GlcNAc-(1-&gt;4)-(O-6-P-alpha-D-Man)]-Thr-[protein] + CDP-L-ribitol = 3-O-[Rib-ol-P-3-beta-D-GalNAc-(1-&gt;3)-beta-D-GlcNAc-(1-&gt;4)-(O-6-P-alpha-D-Man)]-Thr-[protein] + CMP + H(+). The protein operates within protein modification; protein glycosylation. Functionally, catalyzes the transfer of CDP-ribitol to the distal N-acetylgalactosamine of the phosphorylated O-mannosyl trisaccharide (N-acetylgalactosamine-beta-3-N-acetylglucosamine-beta-4-(phosphate-6-)mannose), a carbohydrate structure present in alpha-dystroglycan (DAG1). This constitutes the first step in the formation of the ribitol 5-phosphate tandem repeat which links the phosphorylated O-mannosyl trisaccharide to the ligand binding moiety composed of repeats of 3-xylosyl-alpha-1,3-glucuronic acid-beta-1. May interact with and reinforce a large complex encompassing the outside and inside of muscle membranes. Could be involved in brain development. The protein is Ribitol-5-phosphate transferase FKTN of Macaca fascicularis (Crab-eating macaque).